We begin with the raw amino-acid sequence, 335 residues long: Tryptophan--tRNA ligase (335 aa).

Residues 9–11 (QST) and 17–18 (GN) each bind ATP. The 'HIGH' region signature appears at 10–18 (STNSLTLGN). An L-tryptophan-binding site is contributed by Asp137. ATP contacts are provided by residues 149 to 151 (GKD), Ile189, and 198 to 202 (KMSKS). Residues 198-202 (KMSKS) carry the 'KMSKS' region motif.

The protein belongs to the class-I aminoacyl-tRNA synthetase family. Homodimer.

Its subcellular location is the cytoplasm. The enzyme catalyses tRNA(Trp) + L-tryptophan + ATP = L-tryptophyl-tRNA(Trp) + AMP + diphosphate + H(+). Catalyzes the attachment of tryptophan to tRNA(Trp). In Malacoplasma penetrans (strain HF-2) (Mycoplasma penetrans), this protein is Tryptophan--tRNA ligase.